The following is a 208-amino-acid chain: Proheparin-binding EGF-like growth factor (208 aa).

The first 19 residues, 1–19 (MKLLPSVVLKLFLAAVLSA), serve as a signal peptide directing secretion. The propeptide at 20-62 (LVTGESLERLRRGLAAGTSNPDPPTVSTDQLLPLGGGRDRKVR) is or 72, or 73, or 76, or 81. The Extracellular segment spans residues 20-160 (LVTGESLERL…ENRLYTYDHT (141 aa)). Residues 33-56 (LAAGTSNPDPPTVSTDQLLPLGGG) are disordered. Over residues 36–49 (GTSNPDPPTVSTDQ) the composition is skewed to polar residues. An O-linked (GalNAc...) threonine glycan is attached at Thr-37. O-linked (GalNAc...) serine glycosylation occurs at Ser-38. 4 O-linked (GalNAc...) threonine glycosylation sites follow: Thr-44, Thr-47, Thr-75, and Thr-85. A disordered region spans residues 82 to 104 (ALATPNKEEHGKRKKKGKGLGKK). Positions 93–102 (KRKKKGKGLG) are enriched in basic residues. In terms of domain architecture, EGF-like spans 104–144 (KRDPCLRKYKDFCIHGECKYVKELRAPSCICHPGYHGERCH). Cystine bridges form between Cys-108/Cys-121, Cys-116/Cys-132, and Cys-134/Cys-143. A propeptide spans 149-208 (PVENRLYTYDHTTILAVVAVVLSSVCLLVIVGLLMFRYHRRGGYDVENEEKVKLGMTNSH) (C-terminal). The helical transmembrane segment at 161-184 (TILAVVAVVLSSVCLLVIVGLLMF) threads the bilayer. Residues 185 to 208 (RYHRRGGYDVENEEKVKLGMTNSH) lie on the Cytoplasmic side of the membrane.

In terms of assembly, interacts with FBLN1. Interacts with EGFR and ERBB4. In terms of processing, several N-termini have been identified by direct sequencing. The forms with N-termini 63, 73 and 74 have been tested and found to be biologically active. Post-translationally, O-glycosylated with core 1 or possibly core 8 glycans. Thr-47 is a minor glycosylation site compared to Thr-44.

It is found in the secreted. It localises to the extracellular space. The protein localises to the cell membrane. In terms of biological role, growth factor that mediates its effects via EGFR, ERBB2 and ERBB4. Required for normal cardiac valve formation and normal heart function. Promotes smooth muscle cell proliferation. May be involved in macrophage-mediated cellular proliferation. It is mitogenic for fibroblasts, but not endothelial cells. It is able to bind EGF receptor/EGFR with higher affinity than EGF itself and is a far more potent mitogen for smooth muscle cells than EGF. Also acts as a diphtheria toxin receptor. The protein is Proheparin-binding EGF-like growth factor (HBEGF) of Homo sapiens (Human).